Reading from the N-terminus, the 145-residue chain is Large ribosomal subunit protein uL13 (145 aa).

It belongs to the universal ribosomal protein uL13 family. Part of the 50S ribosomal subunit.

In terms of biological role, this protein is one of the early assembly proteins of the 50S ribosomal subunit, although it is not seen to bind rRNA by itself. It is important during the early stages of 50S assembly. The polypeptide is Large ribosomal subunit protein uL13 (Bacillus cereus (strain ZK / E33L)).